We begin with the raw amino-acid sequence, 318 residues long: tRNA uridine(34) hydroxylase (318 aa).

Residues 123 to 217 (EDDDTVIIDA…YGKDPETKGQ (95 aa)) form the Rhodanese domain. The active-site Cysteine persulfide intermediate is the C177.

The protein belongs to the TrhO family.

It carries out the reaction uridine(34) in tRNA + AH2 + O2 = 5-hydroxyuridine(34) in tRNA + A + H2O. In terms of biological role, catalyzes oxygen-dependent 5-hydroxyuridine (ho5U) modification at position 34 in tRNAs. This chain is tRNA uridine(34) hydroxylase, found in Staphylococcus aureus (strain Mu3 / ATCC 700698).